Reading from the N-terminus, the 254-residue chain is 4-hydroxy-tetrahydrodipicolinate reductase (254 aa).

Residues 8-13, 87-89, and 111-114 each bind NAD(+); these read GASGKM, GTT, and ATNM. H143 (proton donor/acceptor) is an active-site residue. H144 serves as a coordination point for (S)-2,3,4,5-tetrahydrodipicolinate. The active-site Proton donor is K147. (S)-2,3,4,5-tetrahydrodipicolinate is bound at residue 153–154; sequence GT.

The protein belongs to the DapB family.

Its subcellular location is the cytoplasm. It catalyses the reaction (S)-2,3,4,5-tetrahydrodipicolinate + NAD(+) + H2O = (2S,4S)-4-hydroxy-2,3,4,5-tetrahydrodipicolinate + NADH + H(+). It carries out the reaction (S)-2,3,4,5-tetrahydrodipicolinate + NADP(+) + H2O = (2S,4S)-4-hydroxy-2,3,4,5-tetrahydrodipicolinate + NADPH + H(+). Its pathway is amino-acid biosynthesis; L-lysine biosynthesis via DAP pathway; (S)-tetrahydrodipicolinate from L-aspartate: step 4/4. Functionally, catalyzes the conversion of 4-hydroxy-tetrahydrodipicolinate (HTPA) to tetrahydrodipicolinate. This Campylobacter fetus subsp. fetus (strain 82-40) protein is 4-hydroxy-tetrahydrodipicolinate reductase.